Here is an 884-residue protein sequence, read N- to C-terminus: Nonsense-mediated mRNA decay factor EBS1 (884 aa).

Disordered regions lie at residues 596-645 and 755-774; these read NSMK…PTMG and QGGL…NSAY. A compositionally biased stretch (polar residues) spans 633–645; the sequence is RSSSLDSFSPTMG. Positions 760–772 are enriched in low complexity; it reads SSQQPSSMSSLNS.

This sequence belongs to the EST1 family. As to quaternary structure, interacts with NMD helicase UPF1. Interacts with CDC33.

Its subcellular location is the nucleus. The protein resides in the chromosome. The protein localises to the telomere. It is found in the cytoplasm. It localises to the P-body. Its function is as follows. Plays a role in nonsense-mediated mRNA decay (NMD). Recruits UPF1 to cytoplasmic mRNA decay bodies (P-bodies). Negative regulator of gene expression. Inhibits translation most likely through effects on eIF-4E (CDC33). Involved in telomere maintenance. This Saccharomyces cerevisiae (strain ATCC 204508 / S288c) (Baker's yeast) protein is Nonsense-mediated mRNA decay factor EBS1.